We begin with the raw amino-acid sequence, 336 residues long: MGSTFRDRTVELHSLSQTLKKIGAIPSVHQDEDDPASSKRSSPGSEFNKKASRIGLGIKETSQKITRLAKLAKQSTIFNDRTVEIQELTVLIRNDITGLNMALSDLQTLQNMELADGNYSQDQVGHYTAVCDDLKTRLMGATKQLQDVLTTRSENMKAHENRKQLFSTKNAVDSPPQNNAKSVPEPPPWSSSSNPFGNLQQPLLPPLNTGAPPGSQLRRRSAIENAPSQQMEMSLLQQTVPKQENYSQSRAVALHSVESRITELSGIFPQLATMVTQQGELAIRIDDNMDESLVNVEGARSALLQHLTRISSNRWLMMKIFAVIILFLIVFLFFVA.

Over 1–314 (MGSTFRDRTV…QHLTRISSNR (314 aa)) the chain is Cytoplasmic. Disordered regions lie at residues 23 to 53 (GAIP…KASR) and 152 to 218 (RSEN…SQLR). The span at 154–163 (ENMKAHENRK) shows a compositional bias: basic and acidic residues. Over residues 164–181 (QLFSTKNAVDSPPQNNAK) the composition is skewed to polar residues. Low complexity predominate over residues 190–202 (SSSSNPFGNLQQP). Residues 244–306 (ENYSQSRAVA…EGARSALLQH (63 aa)) form the t-SNARE coiled-coil homology domain. Residues 315–335 (WLMMKIFAVIILFLIVFLFFV) form a helical; Anchor for type IV membrane protein membrane-spanning segment. Alanine 336 is a topological domain (vesicular).

The protein belongs to the syntaxin family. As to quaternary structure, part of the t-SNARE complex. Interacts with CDC48A, but not with VPS45.

Its subcellular location is the golgi apparatus. It localises to the cis-Golgi network membrane. It is found in the cytoplasm. The protein localises to the endosome. Vesicle trafficking protein that functions in the secretory pathway. The protein is Syntaxin-31 (SYP31) of Arabidopsis thaliana (Mouse-ear cress).